The primary structure comprises 447 residues: Tubulin beta-1 chain (447 aa).

GTP is bound by residues Q11, E69, S138, G142, T143, G144, N204, and N226. E69 is a Mg(2+) binding site.

Belongs to the tubulin family. Dimer of alpha and beta chains. A typical microtubule is a hollow water-filled tube with an outer diameter of 25 nm and an inner diameter of 15 nM. Alpha-beta heterodimers associate head-to-tail to form protofilaments running lengthwise along the microtubule wall with the beta-tubulin subunit facing the microtubule plus end conferring a structural polarity. Microtubules usually have 13 protofilaments but different protofilament numbers can be found in some organisms and specialized cells. The cofactor is Mg(2+).

It localises to the cytoplasm. It is found in the cytoskeleton. Functionally, tubulin is the major constituent of microtubules, a cylinder consisting of laterally associated linear protofilaments composed of alpha- and beta-tubulin heterodimers. Microtubules grow by the addition of GTP-tubulin dimers to the microtubule end, where a stabilizing cap forms. Below the cap, tubulin dimers are in GDP-bound state, owing to GTPase activity of alpha-tubulin. This chain is Tubulin beta-1 chain (benA), found in Emericella nidulans (strain FGSC A4 / ATCC 38163 / CBS 112.46 / NRRL 194 / M139) (Aspergillus nidulans).